Here is a 90-residue protein sequence, read N- to C-terminus: Progonadoliberin-1 (90 aa).

A signal peptide spans 1–24; the sequence is MSRHVTVVLLLAIVLLLSSHMIHG. The residue at position 25 (glutamine 25) is a Pyrrolidone carboxylic acid. A Glycine amide modification is found at glycine 34.

It belongs to the GnRH family. As to expression, forebrain.

The protein resides in the secreted. Its function is as follows. Stimulates the secretion of gonadotropins. The chain is Progonadoliberin-1 (gnrh1) from Aquarana catesbeiana (American bullfrog).